Reading from the N-terminus, the 343-residue chain is T-cell immunoglobulin and mucin domain-containing protein 4 (343 aa).

A signal peptide spans 1-22 (MSKGLLLLWLVTELWWLYLTPA). In terms of domain architecture, Ig-like V-type spans 23 to 128 (ASEDTIIGFL…WFNDVKKNVR (106 aa)). Residues 23–279 (ASEDTIIGFL…KSHQINSRQT (257 aa)) are Extracellular-facing. 3 cysteine pairs are disulfide-bonded: cysteine 40/cysteine 112, cysteine 53/cysteine 64, and cysteine 59/cysteine 111. Asparagine 220 is a glycosylation site (N-linked (GlcNAc...) asparagine). The interval 239–258 (TGSNPGILPSTSQLTTQKTT) is disordered. Positions 248 to 258 (STSQLTTQKTT) are enriched in low complexity. A helical transmembrane segment spans residues 280 to 300 (ILIIACCVGFVLMVLLFLAFL). Topologically, residues 301–343 (LRGKVTGANCLQRHKRPDNTEDSDSVLNDMSHGRDDEDGIFTL) are cytoplasmic. The interval 313 to 343 (RHKRPDNTEDSDSVLNDMSHGRDDEDGIFTL) is disordered. 3 positions are modified to phosphoserine: serine 323, serine 325, and serine 331.

The protein belongs to the immunoglobulin superfamily. TIM family. Homodimer. As to expression, predominantly expressed in lymphoid tissues, such as spleen, lymph nodes, and Peyer patches. Also expressed in fetal liver, salivary gland, and spleen stromal cells, predominantly in the marginal zone and to a lesser extent throughout the white pulp. Not expressed in bone marrow-derived cells. Expressed mainly by antigen presenting cells (APCs) in T- and B-cell areas, but not by T- or B-lymphocytes.

Its subcellular location is the membrane. Functionally, phosphatidylserine receptor that plays different role in immune response including phagocytosis of apoptotic cells and T-cell regulation. Controls T-cell activation in a bimodal fashion, decreasing the activation of naive T-cells by inducing cell cycle arrest, while increasing proliferation of activated T-cells by activating AKT1 and ERK1/2 phosphorylations and subsequent signaling pathways. Also plays a role in efferocytosis which is the process by which apoptotic cells are removed by phagocytic cells. Mechanistically, promotes the engulfment of apoptotic cells or exogenous particles by securing them to phagocytes through direct binding to phosphatidylserine present on apoptotic cells, while other engulfment receptors such as MERTK efficiently recognize apoptotic cells and mediate their ingestion. Additionally, promotes autophagy process by suppressing NLRP3 inflammasome activity via activation of STK11/PRKAA1 pathway in a phosphatidylserine-dependent mechanism. In Mus musculus (Mouse), this protein is T-cell immunoglobulin and mucin domain-containing protein 4 (Timd4).